Consider the following 198-residue polypeptide: MSIPRVGVLALQGDTREHLAALGEAGAEPMTVRRRSELDAVDGLVIPGGESTTISHLLCGFDLLEPLRARLAAGLPAYGACAGMIMLASEILDAGVRGRQALPLRGIDMTVRRNAFGRQVDSFEGDIAFTGLDHPVRAVFIRAPWVERVGAGVTVLARAGDHIVAVREGSVLATAFHPEVTGDRSIHRLFVDIVNGKA.

Glycine 49 to serine 51 is a binding site for L-glutamine. Cysteine 81 acts as the Nucleophile in catalysis. L-glutamine contacts are provided by residues arginine 113 and isoleucine 141–arginine 142. Active-site charge relay system residues include histidine 177 and glutamate 179.

The protein belongs to the glutaminase PdxT/SNO family. In the presence of PdxS, forms a dodecamer of heterodimers. Only shows activity in the heterodimer.

The catalysed reaction is aldehydo-D-ribose 5-phosphate + D-glyceraldehyde 3-phosphate + L-glutamine = pyridoxal 5'-phosphate + L-glutamate + phosphate + 3 H2O + H(+). The enzyme catalyses L-glutamine + H2O = L-glutamate + NH4(+). The protein operates within cofactor biosynthesis; pyridoxal 5'-phosphate biosynthesis. Its function is as follows. Catalyzes the hydrolysis of glutamine to glutamate and ammonia as part of the biosynthesis of pyridoxal 5'-phosphate. The resulting ammonia molecule is channeled to the active site of PdxS. The protein is Pyridoxal 5'-phosphate synthase subunit PdxT of Mycobacterium ulcerans (strain Agy99).